Here is a 34-residue protein sequence, read N- to C-terminus: Potassium channel toxin alpha-KTx 18.2 (34 aa).

Disulfide bonds link cysteine 7–cysteine 26, cysteine 12–cysteine 31, and cysteine 16–cysteine 33.

In terms of tissue distribution, expressed by the venom gland.

The protein localises to the secreted. Functionally, reversibly blocks Shaker B potassium channels. This chain is Potassium channel toxin alpha-KTx 18.2, found in Tityus discrepans (Venezuelan scorpion).